We begin with the raw amino-acid sequence, 295 residues long: Protoheme IX farnesyltransferase (295 aa).

Helical transmembrane passes span 24 to 44, 45 to 65, 94 to 114, 117 to 137, 144 to 164, 171 to 191, 216 to 236, 240 to 260, and 272 to 292; these read IMYL…GSMH, PFLA…AGAI, SALE…AIAV, ISAA…TIWL, NIVI…AAVT, SFIL…ALSL, KYIL…ALFL, LLYL…AVSV, and MFSY…FCSI.

This sequence belongs to the UbiA prenyltransferase family. Protoheme IX farnesyltransferase subfamily.

It localises to the cell membrane. It catalyses the reaction heme b + (2E,6E)-farnesyl diphosphate + H2O = Fe(II)-heme o + diphosphate. Its pathway is porphyrin-containing compound metabolism; heme O biosynthesis; heme O from protoheme: step 1/1. In terms of biological role, converts heme B (protoheme IX) to heme O by substitution of the vinyl group on carbon 2 of heme B porphyrin ring with a hydroxyethyl farnesyl side group. The chain is Protoheme IX farnesyltransferase from Wolbachia pipientis wMel.